The following is a 307-amino-acid chain: tRNA pseudouridine synthase B (307 aa).

Residue aspartate 39 is the Nucleophile of the active site.

This sequence belongs to the pseudouridine synthase TruB family. Type 1 subfamily.

The catalysed reaction is uridine(55) in tRNA = pseudouridine(55) in tRNA. Responsible for synthesis of pseudouridine from uracil-55 in the psi GC loop of transfer RNAs. The chain is tRNA pseudouridine synthase B from Lactiplantibacillus plantarum (strain ATCC BAA-793 / NCIMB 8826 / WCFS1) (Lactobacillus plantarum).